Consider the following 92-residue polypeptide: Small ribosomal subunit protein uS19c (92 aa).

It belongs to the universal ribosomal protein uS19 family.

The protein resides in the plastid. The protein localises to the chloroplast. Protein S19 forms a complex with S13 that binds strongly to the 16S ribosomal RNA. This Ostreococcus tauri protein is Small ribosomal subunit protein uS19c.